The following is a 465-amino-acid chain: GTPase Der (465 aa).

EngA-type G domains follow at residues 3 to 166 (FLVA…LNEY) and 184 to 358 (IHFS…ACAS). Residues 9-16 (GRANVGKS), 56-60 (DTGGI), 118-121 (NKVD), 190-197 (GRPNVGKS), 237-241 (DTAGV), and 302-305 (NKWD) each bind GTP. The region spanning 359–443 (KKITTADATR…PIVFEFKQSE (85 aa)) is the KH-like domain. A disordered region spans residues 446–465 (FADRKNKRSKDEGSKSKKVK).

It belongs to the TRAFAC class TrmE-Era-EngA-EngB-Septin-like GTPase superfamily. EngA (Der) GTPase family. As to quaternary structure, associates with the 50S ribosomal subunit.

Functionally, GTPase that plays an essential role in the late steps of ribosome biogenesis. The protein is GTPase Der of Francisella tularensis subsp. tularensis (strain FSC 198).